Reading from the N-terminus, the 235-residue chain is Small ribosomal subunit protein uS3 (235 aa).

Positions 39-107 (VRKFLNKELA…PAQINIAEVK (69 aa)) constitute a KH type-2 domain. Residues 215 to 235 (AQSEQQPADKPKKAPRGKGRK) are disordered.

The protein belongs to the universal ribosomal protein uS3 family. In terms of assembly, part of the 30S ribosomal subunit. Forms a tight complex with proteins S10 and S14.

In terms of biological role, binds the lower part of the 30S subunit head. Binds mRNA in the 70S ribosome, positioning it for translation. The sequence is that of Small ribosomal subunit protein uS3 from Haemophilus influenzae (strain ATCC 51907 / DSM 11121 / KW20 / Rd).